A 344-amino-acid chain; its full sequence is MYSRKINMIILGIESSCDDTSAAVVIDGTAIQSNVISGQEEIHNCFGGVVPELASRSHLSAIQPVVEKALSDAKISLDDIDLIATTQGPGLSGSLLVGYSYAKSLSLVKKIPFVGVDHMAGHALAILLEEETPDFPFIALTASGGTSSIFLVKSSTDFELLGRTRDDAAGEAFDKVAKVLGLPYPGGPHIAAHAETGDEKSIKFPRAWLDKDGFDFSFSGLKTAVLNYHNKIVQKNGSITKEERADICASFQQAVIDVLVTKTINAARTHGISTVVLGGGVSSNRALRLAFSHECDKCKLQFFVPAAKLCTDNAAMIAVAGYHKYLRFGPGNLSDDVYSRSQLG.

The Fe cation site is built by H118 and H122. Substrate contacts are provided by residues 141–145 (TASGG), D174, G187, and N284. D312 is a binding site for Fe cation.

This sequence belongs to the KAE1 / TsaD family. The cofactor is Fe(2+).

The protein resides in the cytoplasm. The enzyme catalyses L-threonylcarbamoyladenylate + adenosine(37) in tRNA = N(6)-L-threonylcarbamoyladenosine(37) in tRNA + AMP + H(+). Its function is as follows. Required for the formation of a threonylcarbamoyl group on adenosine at position 37 (t(6)A37) in tRNAs that read codons beginning with adenine. Is involved in the transfer of the threonylcarbamoyl moiety of threonylcarbamoyl-AMP (TC-AMP) to the N6 group of A37, together with TsaE and TsaB. TsaD likely plays a direct catalytic role in this reaction. The sequence is that of tRNA N6-adenosine threonylcarbamoyltransferase from Desulfotalea psychrophila (strain LSv54 / DSM 12343).